The sequence spans 146 residues: Large ribosomal subunit protein uL11 (146 aa).

It belongs to the universal ribosomal protein uL11 family. As to quaternary structure, part of the ribosomal stalk of the 50S ribosomal subunit. Interacts with L10 and the large rRNA to form the base of the stalk. L10 forms an elongated spine to which L12 dimers bind in a sequential fashion forming a multimeric L10(L12)X complex. One or more lysine residues are methylated.

Its function is as follows. Forms part of the ribosomal stalk which helps the ribosome interact with GTP-bound translation factors. This chain is Large ribosomal subunit protein uL11, found in Treponema pallidum subsp. pallidum (strain SS14).